Reading from the N-terminus, the 38-residue chain is Large ribosomal subunit protein bL36 (38 aa).

It belongs to the bacterial ribosomal protein bL36 family.

The sequence is that of Large ribosomal subunit protein bL36 from Fervidobacterium nodosum (strain ATCC 35602 / DSM 5306 / Rt17-B1).